A 480-amino-acid chain; its full sequence is Probable cobyric acid synthase (480 aa).

A GATase cobBQ-type domain is found at P246 to A431. The active-site Nucleophile is the C325. H423 is a catalytic residue.

The protein belongs to the CobB/CobQ family. CobQ subfamily.

Its pathway is cofactor biosynthesis; adenosylcobalamin biosynthesis. Catalyzes amidations at positions B, D, E, and G on adenosylcobyrinic A,C-diamide. NH(2) groups are provided by glutamine, and one molecule of ATP is hydrogenolyzed for each amidation. This is Probable cobyric acid synthase from Methanoregula boonei (strain DSM 21154 / JCM 14090 / 6A8).